A 101-amino-acid chain; its full sequence is Small ribosomal subunit protein bS18c (101 aa).

The protein belongs to the bacterial ribosomal protein bS18 family. Part of the 30S ribosomal subunit.

The protein localises to the plastid. It localises to the chloroplast. The polypeptide is Small ribosomal subunit protein bS18c (Carica papaya (Papaya)).